The primary structure comprises 165 residues: Phosphopantetheine adenylyltransferase (165 aa).

Ser-8 is a substrate binding site. ATP-binding positions include Ser-8–Phe-9 and His-16. Residues Lys-40, Thr-72, and Arg-86 each contribute to the substrate site. Residues Gly-87 to Arg-89, Glu-97, and Tyr-122 to Ser-128 each bind ATP.

Belongs to the bacterial CoaD family. As to quaternary structure, homohexamer. Mg(2+) is required as a cofactor.

The protein resides in the cytoplasm. It carries out the reaction (R)-4'-phosphopantetheine + ATP + H(+) = 3'-dephospho-CoA + diphosphate. The protein operates within cofactor biosynthesis; coenzyme A biosynthesis; CoA from (R)-pantothenate: step 4/5. Its function is as follows. Reversibly transfers an adenylyl group from ATP to 4'-phosphopantetheine, yielding dephospho-CoA (dPCoA) and pyrophosphate. The protein is Phosphopantetheine adenylyltransferase of Synechococcus sp. (strain WH7803).